The chain runs to 170 residues: Small ribosomal subunit protein uS5 (170 aa).

One can recognise an S5 DRBM domain in the interval 12–75; that stretch reads WSELLVSVRR…NAAKKSMIRV (64 aa).

This sequence belongs to the universal ribosomal protein uS5 family. Part of the 30S ribosomal subunit. Contacts proteins S4 and S8.

In terms of biological role, with S4 and S12 plays an important role in translational accuracy. Located at the back of the 30S subunit body where it stabilizes the conformation of the head with respect to the body. This chain is Small ribosomal subunit protein uS5, found in Wolbachia sp. subsp. Brugia malayi (strain TRS).